Consider the following 181-residue polypeptide: Protein Syd (181 aa).

The protein belongs to the Syd family.

It is found in the cell inner membrane. Functionally, interacts with the SecY protein in vivo. May bind preferentially to an uncomplexed state of SecY, thus functioning either as a chelating agent for excess SecY in the cell or as a regulatory factor that negatively controls the translocase function. This Citrobacter koseri (strain ATCC BAA-895 / CDC 4225-83 / SGSC4696) protein is Protein Syd.